A 436-amino-acid polypeptide reads, in one-letter code: Transcriptional regulator dmxR14 (436 aa).

A compositionally biased stretch (polar residues) spans 1 to 27; it reads MEEAETNTQVDSVPSNSVRSGAELSSK. The tract at residues 1-32 is disordered; the sequence is MEEAETNTQVDSVPSNSVRSGAELSSKSKLRD. Residues 34 to 61 constitute a DNA-binding region (zn(2)-C6 fungal-type); it reads CHACARSKVRCPKQKPSCSRCEARGTTC. A disordered region spans residues 67-136; that stretch reads RRPGRRRETS…ITTVHNGPEN (70 aa). The segment covering 90–136 has biased composition (polar residues); it reads SHANNRNSPSFSSTRSTLPSPIASDSNSNFTQPQNSSITTVHNGPEN.

It localises to the nucleus. Transcriptional regulator; part of the gene cluster that mediates the biosynthesis of the dimeric xanthones cryptosporioptides. The protein is Transcriptional regulator dmxR14 of Cryptosporiopsis sp. (strain 8999).